The chain runs to 244 residues: Phosphoadenosine 5'-phosphosulfate reductase (244 aa).

Catalysis depends on cysteine 239, which acts as the Nucleophile; cysteine thiosulfonate intermediate.

It belongs to the PAPS reductase family. CysH subfamily.

It is found in the cytoplasm. The catalysed reaction is [thioredoxin]-disulfide + sulfite + adenosine 3',5'-bisphosphate + 2 H(+) = [thioredoxin]-dithiol + 3'-phosphoadenylyl sulfate. Its pathway is sulfur metabolism; hydrogen sulfide biosynthesis; sulfite from sulfate: step 3/3. Its function is as follows. Catalyzes the formation of sulfite from phosphoadenosine 5'-phosphosulfate (PAPS) using thioredoxin as an electron donor. This chain is Phosphoadenosine 5'-phosphosulfate reductase, found in Salmonella dublin (strain CT_02021853).